A 465-amino-acid chain; its full sequence is Glutamate--tRNA ligase 2 (465 aa).

Residues 8 to 18 carry the 'HIGH' region motif; it reads PSPTGLMHLGN. The 'KMSKS' region motif lies at 249-253; the sequence is PLSKR. Lys-252 is an ATP binding site.

This sequence belongs to the class-I aminoacyl-tRNA synthetase family. Glutamate--tRNA ligase type 1 subfamily. Monomer.

It localises to the cytoplasm. It carries out the reaction tRNA(Glu) + L-glutamate + ATP = L-glutamyl-tRNA(Glu) + AMP + diphosphate. Its function is as follows. Catalyzes the attachment of glutamate to tRNA(Glu) in a two-step reaction: glutamate is first activated by ATP to form Glu-AMP and then transferred to the acceptor end of tRNA(Glu). The sequence is that of Glutamate--tRNA ligase 2 from Coxiella burnetii (strain RSA 331 / Henzerling II).